Reading from the N-terminus, the 612-residue chain is MIDENFKKKLAVSRERVEDLFYFENSKEIGRGTYGLVYKAVPKHSNGRFPNKEYALKMIEGQGFSMSACREIALFRELRHPNLICLQRVFLTNEKKVWLLLDYAEHDLWHVIKHHRTAKTKKVPIMVPRNMVKNILFQILSGMHYLHSNWVLHRDLKPANILLMGDGGPDMRGRVKIADLGFSRIFANPLKPMAELDPVVVTFWYRAPELLLGAKHYTKAIDVWAIGCIFAELLTAEPLFFCKEEDIKAQNPYHYDQVKRIFHLLGYPSDTDWPDMKKMPDHQRLLNDARNEGTPIQTFPNSLQRYFDKWKINSQSSPYRLLVKLLTVDPLKRVSCEEAMNDIYFRKMERPPRETDDVFNRYPIPYAKKEQQITIPIDQFQQQQQQQQQQQQQQQQQQQQQQQQQMQQPQIGPPQMMGQPQMGQPQMGQPQMGQPQMGQPQMGQPQMVPSQMGQPPMGGPHPGVVAPDGHAHQMMQQQHQSQHHMQYQQMHDSMQGGMDDGGPQAKMMRMGNVPVGRYGPMGPPYGPQDFHAPQGPPMMQMMPQPGPSGYYQQRPGQPPGPGPQGYMNPQMGMTMGMRPQGVPQQAYMPGRGMPPPQGPNPQQQQQWQQYHR.

Residues 23–345 form the Protein kinase domain; sequence FENSKEIGRG…CEEAMNDIYF (323 aa). ATP is bound by residues 29 to 37 and Lys57; that span reads IGRGTYGLV. Asp155 (proton acceptor) is an active-site residue. Low complexity-rich tracts occupy residues 403–455, 472–483, 543–555, 564–573, and 600–612; these read QQQM…MGQP, HQMMQQQHQSQH, PQPGPSGYYQQRP, QGYMNPQMGM, and NPQQQQQWQQYHR. 2 disordered regions span residues 403–483 and 543–612; these read QQQM…QSQH and PQPG…QYHR.

This sequence belongs to the protein kinase superfamily. CMGC Ser/Thr protein kinase family. CDC2/CDKX subfamily. In terms of assembly, component of the Mediator complex. It depends on Mg(2+) as a cofactor.

It is found in the nucleus. It catalyses the reaction L-seryl-[protein] + ATP = O-phospho-L-seryl-[protein] + ADP + H(+). The enzyme catalyses L-threonyl-[protein] + ATP = O-phospho-L-threonyl-[protein] + ADP + H(+). It carries out the reaction [DNA-directed RNA polymerase] + ATP = phospho-[DNA-directed RNA polymerase] + ADP + H(+). In terms of biological role, component of the Mediator complex, a coactivator involved in regulated gene transcription of nearly all RNA polymerase II-dependent genes. Mediator functions as a bridge to convey information from gene-specific regulatory proteins to the basal RNA polymerase II transcription machinery. Mediator is recruited to promoters by direct interactions with regulatory proteins and serves as a scaffold for the assembly of a functional pre-initiation complex with RNA polymerase II and the general transcription factors. Phosphorylates the CTD (C-terminal domain) of the large subunit of RNA polymerase II (RNAp II), which may inhibit the formation of a transcription initiation complex. The protein is Cyclin-dependent kinase 8 (cdk-8) of Caenorhabditis briggsae.